A 432-amino-acid polypeptide reads, in one-letter code: Adenylosuccinate synthetase (432 aa).

GTP-binding positions include 13–19 (GDEGKGK) and 41–43 (GHT). D14 functions as the Proton acceptor in the catalytic mechanism. Residues D14 and G41 each contribute to the Mg(2+) site. IMP contacts are provided by residues 14–17 (DEGK), 39–42 (NAGH), T130, R144, Q225, T240, and R304. H42 serves as the catalytic Proton donor. 300–306 (ATTGRRR) is a substrate binding site. GTP contacts are provided by residues R306, 332-334 (KLD), and 415-417 (STG).

It belongs to the adenylosuccinate synthetase family. In terms of assembly, homodimer. The cofactor is Mg(2+).

It is found in the cytoplasm. The catalysed reaction is IMP + L-aspartate + GTP = N(6)-(1,2-dicarboxyethyl)-AMP + GDP + phosphate + 2 H(+). It participates in purine metabolism; AMP biosynthesis via de novo pathway; AMP from IMP: step 1/2. In terms of biological role, plays an important role in the de novo pathway of purine nucleotide biosynthesis. Catalyzes the first committed step in the biosynthesis of AMP from IMP. This chain is Adenylosuccinate synthetase, found in Shigella sonnei (strain Ss046).